Consider the following 499-residue polypeptide: uncharacterized protein (499 aa).

Residues 6–35 (EAVIIGGGPVGFMLASELAIAGVGTCVIER) and 272–282 (YRDGRIFLAGD) each bind FAD.

It belongs to the PheA/TfdB FAD monooxygenase family. The cofactor is FAD.

This is an uncharacterized protein from Bacillus subtilis (strain 168).